The chain runs to 268 residues: MMSDTLRAVLLGIVEGVTEFLPVSSTGHLLLAERFFGLGEDGFWKSFAILIQLGAILAIVALYFFKLSRVAIGALTNPDDRRFIIGVLIAFLPAVIIGLIAGKYIKALLFDPWVVCFSLIVGGAILLWVDQIDLKPREHDATRYPLMMYLWIGVAQCLAMIPGVSRSGSTIVAAMLLGGDKRSAAEFSFFLAIPTMVGAFVYDFYKSRAEMTSDHLGLIAIGFVVSFITAMIVVKAFLGYVTRHGFVLFAWWRVIVGTLGLIALALGK.

A run of 7 helical transmembrane segments spans residues 47-67, 83-103, 109-129, 144-164, 184-204, 218-238, and 246-266; these read FAIL…FFKL, FIIG…IAGK, LFDP…LLWV, YPLM…IPGV, AAEF…VYDF, LIAI…KAFL, and FVLF…ALAL.

This sequence belongs to the UppP family.

Its subcellular location is the cell inner membrane. It catalyses the reaction di-trans,octa-cis-undecaprenyl diphosphate + H2O = di-trans,octa-cis-undecaprenyl phosphate + phosphate + H(+). Its function is as follows. Catalyzes the dephosphorylation of undecaprenyl diphosphate (UPP). Confers resistance to bacitracin. The polypeptide is Undecaprenyl-diphosphatase (Bradyrhizobium sp. (strain ORS 278)).